A 234-amino-acid polypeptide reads, in one-letter code: Proteasome subunit beta (234 aa).

The interval 1–35 is disordered; that stretch reads MNPDLNMNPHDSGRTDPYAPELGEIATDEGDGENV. A propeptide spans 1–39 (removed in mature form; by autocatalysis); it reads MNPDLNMNPHDSGRTDPYAPELGEIATDEGDGENVTKTG. Catalysis depends on Thr40, which acts as the Nucleophile.

The protein belongs to the peptidase T1B family. The 20S proteasome core is composed of 14 alpha and 14 beta subunits that assemble into four stacked heptameric rings, resulting in a barrel-shaped structure. The two inner rings, each composed of seven catalytic beta subunits, are sandwiched by two outer rings, each composed of seven alpha subunits. The catalytic chamber with the active sites is on the inside of the barrel. Has a gated structure, the ends of the cylinder being occluded by the N-termini of the alpha-subunits. Is capped at one or both ends by the proteasome regulatory ATPase, PAN.

Its subcellular location is the cytoplasm. It catalyses the reaction Cleavage of peptide bonds with very broad specificity.. With respect to regulation, the formation of the proteasomal ATPase PAN-20S proteasome complex, via the docking of the C-termini of PAN into the intersubunit pockets in the alpha-rings, triggers opening of the gate for substrate entry. Interconversion between the open-gate and close-gate conformations leads to a dynamic regulation of the 20S proteasome proteolysis activity. In terms of biological role, component of the proteasome core, a large protease complex with broad specificity involved in protein degradation. The chain is Proteasome subunit beta from Halorhabdus utahensis (strain DSM 12940 / JCM 11049 / AX-2).